The chain runs to 439 residues: Methylenetetrahydrofolate--tRNA-(uracil-5-)-methyltransferase TrmFO (439 aa).

FAD is bound at residue 7–12 (GAGLAG).

This sequence belongs to the MnmG family. TrmFO subfamily. Requires FAD as cofactor.

It localises to the cytoplasm. It carries out the reaction uridine(54) in tRNA + (6R)-5,10-methylene-5,6,7,8-tetrahydrofolate + NADH + H(+) = 5-methyluridine(54) in tRNA + (6S)-5,6,7,8-tetrahydrofolate + NAD(+). It catalyses the reaction uridine(54) in tRNA + (6R)-5,10-methylene-5,6,7,8-tetrahydrofolate + NADPH + H(+) = 5-methyluridine(54) in tRNA + (6S)-5,6,7,8-tetrahydrofolate + NADP(+). Functionally, catalyzes the folate-dependent formation of 5-methyl-uridine at position 54 (M-5-U54) in all tRNAs. The chain is Methylenetetrahydrofolate--tRNA-(uracil-5-)-methyltransferase TrmFO from Heliobacterium modesticaldum (strain ATCC 51547 / Ice1).